The following is a 142-amino-acid chain: Transcription antitermination protein NusB (142 aa).

It belongs to the NusB family.

Functionally, involved in transcription antitermination. Required for transcription of ribosomal RNA (rRNA) genes. Binds specifically to the boxA antiterminator sequence of the ribosomal RNA (rrn) operons. This chain is Transcription antitermination protein NusB, found in Persephonella marina (strain DSM 14350 / EX-H1).